Consider the following 220-residue polypeptide: MQINKYIDHTILKADAPKSKVQQIIDEAKKYDFMSVCINPTWVSYASQELKDSDVKVCTVIGFPLGANTSELKAFEAKNAIENGADEIDMVINIGAAKSKDWNLVESDIAAVNAVKGDKLLKVIIETSLLTDDEKIKACQIAKAVGADFVKTSTGFSTGGATVHDVKLMRQTVGPDMGVKASGGVHNLEEAKAMIDAGATRLGVSAGVAIMEGLTSNDNY.

Aspartate 89 (proton donor/acceptor) is an active-site residue. Lysine 151 (schiff-base intermediate with acetaldehyde) is an active-site residue. Lysine 180 acts as the Proton donor/acceptor in catalysis.

This sequence belongs to the DeoC/FbaB aldolase family. DeoC type 1 subfamily.

The protein localises to the cytoplasm. It catalyses the reaction 2-deoxy-D-ribose 5-phosphate = D-glyceraldehyde 3-phosphate + acetaldehyde. It functions in the pathway carbohydrate degradation; 2-deoxy-D-ribose 1-phosphate degradation; D-glyceraldehyde 3-phosphate and acetaldehyde from 2-deoxy-alpha-D-ribose 1-phosphate: step 2/2. In terms of biological role, catalyzes a reversible aldol reaction between acetaldehyde and D-glyceraldehyde 3-phosphate to generate 2-deoxy-D-ribose 5-phosphate. This chain is Deoxyribose-phosphate aldolase, found in Lactococcus lactis subsp. lactis (strain IL1403) (Streptococcus lactis).